The sequence spans 359 residues: Aspartate carbamoyltransferase catalytic subunit (359 aa).

Positions 52 and 53 each coordinate carbamoyl phosphate. Lys81 contributes to the L-aspartate binding site. 3 residues coordinate carbamoyl phosphate: Arg102, His130, and Gln133. L-aspartate is bound by residues Arg163 and Arg224. 2 residues coordinate carbamoyl phosphate: Leu264 and Pro265.

It belongs to the aspartate/ornithine carbamoyltransferase superfamily. ATCase family. As to quaternary structure, heterododecamer (2C3:3R2) of six catalytic PyrB chains organized as two trimers (C3), and six regulatory PyrI chains organized as three dimers (R2).

It carries out the reaction carbamoyl phosphate + L-aspartate = N-carbamoyl-L-aspartate + phosphate + H(+). It participates in pyrimidine metabolism; UMP biosynthesis via de novo pathway; (S)-dihydroorotate from bicarbonate: step 2/3. Its function is as follows. Catalyzes the condensation of carbamoyl phosphate and aspartate to form carbamoyl aspartate and inorganic phosphate, the committed step in the de novo pyrimidine nucleotide biosynthesis pathway. This Brachyspira hyodysenteriae (strain ATCC 49526 / WA1) protein is Aspartate carbamoyltransferase catalytic subunit.